Reading from the N-terminus, the 567-residue chain is Formate--tetrahydrofolate ligase (567 aa).

76–83 (TPAGEGKT) provides a ligand contact to ATP.

It belongs to the formate--tetrahydrofolate ligase family.

It carries out the reaction (6S)-5,6,7,8-tetrahydrofolate + formate + ATP = (6R)-10-formyltetrahydrofolate + ADP + phosphate. Its pathway is one-carbon metabolism; tetrahydrofolate interconversion. This is Formate--tetrahydrofolate ligase from Sinorhizobium medicae (strain WSM419) (Ensifer medicae).